The chain runs to 485 residues: Glutamyl-tRNA(Gln) amidotransferase subunit A (485 aa).

Active-site charge relay system residues include K78 and S153. The Acyl-ester intermediate role is filled by S177.

It belongs to the amidase family. GatA subfamily. In terms of assembly, heterotrimer of A, B and C subunits.

The catalysed reaction is L-glutamyl-tRNA(Gln) + L-glutamine + ATP + H2O = L-glutaminyl-tRNA(Gln) + L-glutamate + ADP + phosphate + H(+). Allows the formation of correctly charged Gln-tRNA(Gln) through the transamidation of misacylated Glu-tRNA(Gln) in organisms which lack glutaminyl-tRNA synthetase. The reaction takes place in the presence of glutamine and ATP through an activated gamma-phospho-Glu-tRNA(Gln). This chain is Glutamyl-tRNA(Gln) amidotransferase subunit A, found in Bacillus cereus (strain AH820).